The chain runs to 270 residues: Undecaprenyl-diphosphatase 1 (270 aa).

6 helical membrane-spanning segments follow: residues 41-61, 88-108, 117-137, 192-212, 218-238, and 250-270; these read IEGF…VLLV, FRFI…GVLF, KDGV…LFLI, FSFL…ITDI, LGEL…ATYF, and GNLV…LIFA.

It belongs to the UppP family.

Its subcellular location is the cell membrane. It catalyses the reaction di-trans,octa-cis-undecaprenyl diphosphate + H2O = di-trans,octa-cis-undecaprenyl phosphate + phosphate + H(+). In terms of biological role, catalyzes the dephosphorylation of undecaprenyl diphosphate (UPP). Confers resistance to bacitracin. The protein is Undecaprenyl-diphosphatase 1 of Bacillus licheniformis (strain ATCC 14580 / DSM 13 / JCM 2505 / CCUG 7422 / NBRC 12200 / NCIMB 9375 / NCTC 10341 / NRRL NRS-1264 / Gibson 46).